The primary structure comprises 161 residues: Peptidyl-prolyl cis-trans isomerase-like 3 (161 aa).

The region spanning Met-1–Ile-154 is the PPIase cyclophilin-type domain.

This sequence belongs to the cyclophilin-type PPIase family. PPIL3 subfamily.

It carries out the reaction [protein]-peptidylproline (omega=180) = [protein]-peptidylproline (omega=0). Functionally, PPIases accelerate the folding of proteins. It catalyzes the cis-trans isomerization of proline imidic peptide bonds in oligopeptides. The polypeptide is Peptidyl-prolyl cis-trans isomerase-like 3 (PPIL3) (Gallus gallus (Chicken)).